A 974-amino-acid polypeptide reads, in one-letter code: UvrABC system protein A (974 aa).

Gly-34–Ser-41 is an ATP binding site. ABC transporter domains are found at residues Trp-331–Leu-610 and Ile-630–Lys-959. ATP is bound at residue Gly-663 to Ser-670. The C4-type zinc finger occupies Cys-762–Cys-788.

It belongs to the ABC transporter superfamily. UvrA family. As to quaternary structure, forms a heterotetramer with UvrB during the search for lesions.

The protein localises to the cytoplasm. The UvrABC repair system catalyzes the recognition and processing of DNA lesions. UvrA is an ATPase and a DNA-binding protein. A damage recognition complex composed of 2 UvrA and 2 UvrB subunits scans DNA for abnormalities. When the presence of a lesion has been verified by UvrB, the UvrA molecules dissociate. In Brucella abortus (strain 2308), this protein is UvrABC system protein A.